The chain runs to 160 residues: Small ribosomal subunit protein uS7 (160 aa).

Belongs to the universal ribosomal protein uS7 family. Part of the 30S ribosomal subunit. Contacts proteins S9 and S11.

Functionally, one of the primary rRNA binding proteins, it binds directly to 16S rRNA where it nucleates assembly of the head domain of the 30S subunit. Is located at the subunit interface close to the decoding center, probably blocks exit of the E-site tRNA. This is Small ribosomal subunit protein uS7 from Rickettsia massiliae (strain Mtu5).